The primary structure comprises 315 residues: Aspartate carbamoyltransferase catalytic subunit (315 aa).

Carbamoyl phosphate contacts are provided by R55 and T56. L-aspartate is bound at residue K83. Carbamoyl phosphate contacts are provided by R105, H138, and Q141. Residues R171 and R225 each coordinate L-aspartate. Carbamoyl phosphate contacts are provided by G266 and P267.

This sequence belongs to the aspartate/ornithine carbamoyltransferase superfamily. ATCase family. In terms of assembly, heterododecamer (2C3:3R2) of six catalytic PyrB chains organized as two trimers (C3), and six regulatory PyrI chains organized as three dimers (R2).

The catalysed reaction is carbamoyl phosphate + L-aspartate = N-carbamoyl-L-aspartate + phosphate + H(+). The protein operates within pyrimidine metabolism; UMP biosynthesis via de novo pathway; (S)-dihydroorotate from bicarbonate: step 2/3. Its function is as follows. Catalyzes the condensation of carbamoyl phosphate and aspartate to form carbamoyl aspartate and inorganic phosphate, the committed step in the de novo pyrimidine nucleotide biosynthesis pathway. This Mycolicibacterium vanbaalenii (strain DSM 7251 / JCM 13017 / BCRC 16820 / KCTC 9966 / NRRL B-24157 / PYR-1) (Mycobacterium vanbaalenii) protein is Aspartate carbamoyltransferase catalytic subunit.